A 214-amino-acid chain; its full sequence is Cytochrome b (214 aa).

4 helical membrane-spanning segments follow: residues 31 to 51, 75 to 96, 111 to 131, and 176 to 196; these read FGSM…FLAI, WIMQ…YIHI, WLSG…GYVL, and FFAL…AHIL. Positions 81 and 95 each coordinate heme b. Residues histidine 180 and histidine 194 each coordinate heme b. Histidine 199 is an a ubiquinone binding site.

It belongs to the cytochrome b family. In terms of assembly, the cytochrome bc1 complex contains 3 respiratory subunits (MT-CYB, CYC1 and UQCRFS1), 2 core proteins (UQCRC1 and UQCRC2) and probably 6 low-molecular weight proteins. Heme b is required as a cofactor.

Its subcellular location is the mitochondrion inner membrane. Functionally, component of the ubiquinol-cytochrome c reductase complex (complex III or cytochrome b-c1 complex) that is part of the mitochondrial respiratory chain. The b-c1 complex mediates electron transfer from ubiquinol to cytochrome c. Contributes to the generation of a proton gradient across the mitochondrial membrane that is then used for ATP synthesis. This is Cytochrome b (MT-CYB) from Bothriechis schlegelii (Eyelash palm pitviper).